Reading from the N-terminus, the 251-residue chain is MQYKYLLEYNKKNHECNPCHVAIIMDGNGRWATRQGKIRIMGHKEGFRAVKEAIKFSIANNLKILTLYAFSSENWNRPLFEIKALMELFLFALDTEIKNLKKHNIRFKVIGDITCFDKKLQNSIHYAEQITFDNTGLILNIAANYGGRWDIIESVKKIINRVQRGILDVNKIHENTISQYLSTSELLPVDLVIRTGGEKRISNFLLWQIAYSELYFTDVLWPDFNCHIFQHAIDSFVSRERRFGGFKKNKK.

Asp26 is a catalytic residue. Residue Asp26 coordinates Mg(2+). Residues 27–30, Trp31, Arg39, His43, and 71–73 each bind substrate; these read GNGR and SSE. Asn74 serves as the catalytic Proton acceptor. Residues Trp75, Arg77, Arg194, and 200-202 each bind substrate; that span reads RIS. Residue Glu213 coordinates Mg(2+).

The protein belongs to the UPP synthase family. Homodimer. Mg(2+) is required as a cofactor.

The catalysed reaction is 8 isopentenyl diphosphate + (2E,6E)-farnesyl diphosphate = di-trans,octa-cis-undecaprenyl diphosphate + 8 diphosphate. Functionally, catalyzes the sequential condensation of isopentenyl diphosphate (IPP) with (2E,6E)-farnesyl diphosphate (E,E-FPP) to yield (2Z,6Z,10Z,14Z,18Z,22Z,26Z,30Z,34E,38E)-undecaprenyl diphosphate (di-trans,octa-cis-UPP). UPP is the precursor of glycosyl carrier lipid in the biosynthesis of bacterial cell wall polysaccharide components such as peptidoglycan and lipopolysaccharide. In Buchnera aphidicola subsp. Acyrthosiphon pisum (strain APS) (Acyrthosiphon pisum symbiotic bacterium), this protein is Ditrans,polycis-undecaprenyl-diphosphate synthase ((2E,6E)-farnesyl-diphosphate specific).